The following is a 38-amino-acid chain: Photosystem II reaction center protein M (38 aa).

A helical membrane pass occupies residues 7 to 27 (GFVASILFVLVPSVFLIILYI).

It belongs to the PsbM family. In terms of assembly, PSII is composed of 1 copy each of membrane proteins PsbA, PsbB, PsbC, PsbD, PsbE, PsbF, PsbH, PsbI, PsbJ, PsbK, PsbL, PsbM, PsbT, PsbX, PsbY, PsbZ, Psb30/Ycf12, peripheral proteins PsbO, CyanoQ (PsbQ), PsbU, PsbV and a large number of cofactors. It forms dimeric complexes.

Its subcellular location is the cellular thylakoid membrane. Functionally, one of the components of the core complex of photosystem II (PSII). PSII is a light-driven water:plastoquinone oxidoreductase that uses light energy to abstract electrons from H(2)O, generating O(2) and a proton gradient subsequently used for ATP formation. It consists of a core antenna complex that captures photons, and an electron transfer chain that converts photonic excitation into a charge separation. This subunit is found at the monomer-monomer interface. The sequence is that of Photosystem II reaction center protein M from Nostoc sp. (strain PCC 7120 / SAG 25.82 / UTEX 2576).